The sequence spans 218 residues: Ras-related protein Rab-4A (218 aa).

GTP-binding residues include Gly23, Thr24, Gly25, Lys26, Ser27, Cys28, Ser42, His44, and Thr45. Ser27 is a binding site for Mg(2+). Residues 44-49 (HTIGVE) carry the Switch 1 motif. Residues Thr45 and Asp68 each contribute to the Mg(2+) site. A Switch 2 motif is present at residues 70-79 (AGQERFRSVT). Gly71 is a binding site for GTP. Position 72 is a 5-glutamyl serotonin (Gln72). Asn126, Lys127, Asp129, Ala157, and Leu158 together coordinate GTP. Ser190 carries the post-translational modification Phosphoserine. Position 204 is a phosphoserine; by CDK1 (Ser204). 2 S-geranylgeranyl cysteine lipidation sites follow: Cys216 and Cys218. A Cysteine methyl ester modification is found at Cys218.

The protein belongs to the small GTPase superfamily. Rab family. As to quaternary structure, interacts with RAB11FIP1, RABEP1, ZFYVE20 and RUFY1. Interacts with SGSM1, SGSM2 and SGSM3. Interacts (membrane-bound form) with NDRG1; the interaction involves NDRG1 in vesicular recycling of E-cadherin. Interacts (in GTP-bound form) with GRIPAP1. Interacts with RABEP1 and RBSN. Does not interact with HPS4. Mg(2+) serves as cofactor. Post-translationally, serotonylation of Gln-72 by TGM2 during activation and aggregation of platelets leads to constitutive activation of GTPase activity. In terms of processing, phosphorylated by CDK1 kinase during mitosis.

The protein localises to the membrane. The protein resides in the cytoplasm. It localises to the early endosome membrane. Its subcellular location is the recycling endosome membrane. It carries out the reaction GTP + H2O = GDP + phosphate + H(+). Regulated by guanine nucleotide exchange factors (GEFs) which promote the exchange of bound GDP for free GTP. Regulated by GTPase activating proteins (GAPs) which increase the GTP hydrolysis activity. Inhibited by GDP dissociation inhibitors (GDIs). Functionally, the small GTPases Rab are key regulators of intracellular membrane trafficking, from the formation of transport vesicles to their fusion with membranes. Rabs cycle between an inactive GDP-bound form and an active GTP-bound form that is able to recruit to membranes different sets of downstream effectors directly responsible for vesicle formation, movement, tethering and fusion. RAB4A is involved in protein transport. Also plays a role in vesicular traffic. Mediates VEGFR2 endosomal trafficking to enhance VEGFR2 signaling. Acts as a regulator of platelet alpha-granule release during activation and aggregation of platelets. This is Ras-related protein Rab-4A (RAB4A) from Bos taurus (Bovine).